The sequence spans 102 residues: Small ribosomal subunit protein bS6 (102 aa).

The protein belongs to the bacterial ribosomal protein bS6 family.

Functionally, binds together with bS18 to 16S ribosomal RNA. The chain is Small ribosomal subunit protein bS6 from Deinococcus geothermalis (strain DSM 11300 / CIP 105573 / AG-3a).